A 299-amino-acid chain; its full sequence is MSNKIKAAIIGPGNIGMDLMFKLMRSKYIDVDTVVGIIPESEGLALARKHGKKTSAEGIKAILGNKDIKIVFDATSAKAHLKHAPLLEQDGKIAIDLTPAAVGPYCVPAVTMEEQLNCKNVNMVTCAGQATTPIVYAINKIADVKYAEIVATISSRSAGPGTRQNIDEFTETTAKALEKIGGADKGKAIIILNPAEPPIMMRNTIYTRVANPDAPGIIEAIEEMVGKIKKYVPGYRLKVPPIIDGDKITTIIEVEGEGAYLPKYAGNLDIITAAAVAFADEVAKKLLAEEQAKEVRAHG.

Catalysis depends on cysteine 126, which acts as the Acyl-thioester intermediate. NAD(+) is bound by residues 157-165 (SAGPGTRQN) and asparagine 267.

This sequence belongs to the acetaldehyde dehydrogenase family.

It catalyses the reaction acetaldehyde + NAD(+) + CoA = acetyl-CoA + NADH + H(+). The polypeptide is Acetaldehyde dehydrogenase (mhpF) (Carboxydothermus hydrogenoformans (strain ATCC BAA-161 / DSM 6008 / Z-2901)).